We begin with the raw amino-acid sequence, 586 residues long: Putative ABC transporter ATP-binding protein MG187 homolog (586 aa).

An ABC transporter domain is found at 13–464 (IEFKNIVVDF…PANEFVATFL (452 aa)). 45-52 (GPSGCGKT) is a binding site for ATP.

It belongs to the ABC transporter superfamily.

The chain is Putative ABC transporter ATP-binding protein MG187 homolog from Mycoplasma pneumoniae (strain ATCC 29342 / M129 / Subtype 1) (Mycoplasmoides pneumoniae).